Here is a 282-residue protein sequence, read N- to C-terminus: Elongation factor Ts (282 aa).

The segment at 80 to 83 (TDFV) is involved in Mg(2+) ion dislocation from EF-Tu.

Belongs to the EF-Ts family.

The protein resides in the cytoplasm. Associates with the EF-Tu.GDP complex and induces the exchange of GDP to GTP. It remains bound to the aminoacyl-tRNA.EF-Tu.GTP complex up to the GTP hydrolysis stage on the ribosome. In Chlamydia muridarum (strain MoPn / Nigg), this protein is Elongation factor Ts (tsf).